The sequence spans 110 residues: Large ribosomal subunit protein uL22 (110 aa).

It belongs to the universal ribosomal protein uL22 family. In terms of assembly, part of the 50S ribosomal subunit.

This protein binds specifically to 23S rRNA; its binding is stimulated by other ribosomal proteins, e.g. L4, L17, and L20. It is important during the early stages of 50S assembly. It makes multiple contacts with different domains of the 23S rRNA in the assembled 50S subunit and ribosome. Functionally, the globular domain of the protein is located near the polypeptide exit tunnel on the outside of the subunit, while an extended beta-hairpin is found that lines the wall of the exit tunnel in the center of the 70S ribosome. The sequence is that of Large ribosomal subunit protein uL22 from Histophilus somni (strain 2336) (Haemophilus somnus).